A 485-amino-acid polypeptide reads, in one-letter code: Probable glycine dehydrogenase (decarboxylating) subunit 2 (485 aa).

An N6-(pyridoxal phosphate)lysine modification is found at K273.

This sequence belongs to the GcvP family. C-terminal subunit subfamily. The glycine cleavage system is composed of four proteins: P, T, L and H. In this organism, the P 'protein' is a heterodimer of two subunits. Pyridoxal 5'-phosphate serves as cofactor.

The catalysed reaction is N(6)-[(R)-lipoyl]-L-lysyl-[glycine-cleavage complex H protein] + glycine + H(+) = N(6)-[(R)-S(8)-aminomethyldihydrolipoyl]-L-lysyl-[glycine-cleavage complex H protein] + CO2. In terms of biological role, the glycine cleavage system catalyzes the degradation of glycine. The P protein binds the alpha-amino group of glycine through its pyridoxal phosphate cofactor; CO(2) is released and the remaining methylamine moiety is then transferred to the lipoamide cofactor of the H protein. The protein is Probable glycine dehydrogenase (decarboxylating) subunit 2 of Bacillus licheniformis (strain ATCC 14580 / DSM 13 / JCM 2505 / CCUG 7422 / NBRC 12200 / NCIMB 9375 / NCTC 10341 / NRRL NRS-1264 / Gibson 46).